The chain runs to 563 residues: Delta-1-pyrroline-5-carboxylate dehydrogenase, mitochondrial (563 aa).

The N-terminal 24 residues, 1–24, are a transit peptide targeting the mitochondrion; it reads MLLRSAALCRALLARRGRAAGLCR. Position 44 is a phosphoserine (Ser-44). An N6-acetyllysine modification is found at Lys-52. N6-acetyllysine; alternate is present on residues Lys-93, Lys-99, Lys-114, Lys-130, and Lys-175. Lys-93, Lys-99, Lys-114, Lys-130, and Lys-175 each carry N6-succinyllysine; alternate. Residues Ser-208, Lys-233, and 286-290 each bind NAD(+); that span reads GSVPT. Residue Glu-314 is the Proton acceptor of the active site. The residue at position 318 (Lys-318) is an N6-acetyllysine. Lys-347 is modified (N6-succinyllysine). Cys-348 functions as the Nucleophile in the catalytic mechanism. N6-acetyllysine occurs at positions 365 and 376. The residue at position 395 (Lys-395) is an N6-succinyllysine. Residue Glu-447 coordinates NAD(+). The residue at position 509 (Lys-509) is an N6-acetyllysine; alternate. Lys-509 bears the N6-succinyllysine; alternate mark. Ser-513 provides a ligand contact to substrate. The residue at position 531 (Lys-531) is an N6-acetyllysine.

This sequence belongs to the aldehyde dehydrogenase family. In terms of assembly, homodimer.

The protein resides in the mitochondrion matrix. The catalysed reaction is L-glutamate 5-semialdehyde + NAD(+) + H2O = L-glutamate + NADH + 2 H(+). The protein operates within amino-acid degradation; L-proline degradation into L-glutamate; L-glutamate from L-proline: step 2/2. Functionally, irreversible conversion of delta-1-pyrroline-5-carboxylate (P5C), derived either from proline or ornithine, to glutamate. This is a necessary step in the pathway interconnecting the urea and tricarboxylic acid cycles. The preferred substrate is glutamic gamma-semialdehyde, other substrates include succinic, glutaric and adipic semialdehydes. This chain is Delta-1-pyrroline-5-carboxylate dehydrogenase, mitochondrial (ALDH4A1), found in Bos taurus (Bovine).